We begin with the raw amino-acid sequence, 79 residues long: Cytochrome c oxidase subunit 7A1, mitochondrial (79 aa).

Residues 1–21 (MQALRVSQALIRSFSSTARNR) constitute a mitochondrion transit peptide. Over 22 to 46 (FQNRVREKQKLFQEDNDIPLYLKGG) the chain is Mitochondrial matrix. The chain crosses the membrane as a helical span at residues 47 to 75 (IVDNILYRVTMTLCLGGTVYSLYSLGWAS). The Mitochondrial intermembrane portion of the chain corresponds to 76-79 (FPRN).

The protein belongs to the cytochrome c oxidase VIIa family. As to quaternary structure, component of the complex IV (CIV, cytochrome c oxidase), a multisubunit enzyme composed of 14 subunits. The complex is composed of a catalytic core of 3 subunits MT-CO1, MT-CO2 and MT-CO3, encoded in the mitochondrial DNA, and 11 supernumerary subunits COX4I1 (or COX4I2), COX5A, COX5B, COX6A2 (or COX6A1), COX6B1 (or COX6B2), COX6C, COX7A1 (or COX7A2), COX7B, COX7C, COX8B and NDUFA4, which are encoded in the nuclear genome. The complex exists as a monomer or a dimer and forms supercomplexes (SCs) in the inner mitochondrial membrane with NADH-ubiquinone oxidoreductase (complex I, CI) and ubiquinol-cytochrome c oxidoreductase (cytochrome b-c1 complex, complex III, CIII), resulting in different assemblies (supercomplex SCI(1)III(2)IV(1) and megacomplex MCI(2)III(2)IV(2)).

It is found in the mitochondrion inner membrane. It participates in energy metabolism; oxidative phosphorylation. Its function is as follows. Component of the mitochondrial respiratory complex IV (CIV, also named cytochrome c oxidase complex), the last enzyme in the mitochondrial electron transport chain which drives oxidative phosphorylation. The CIV complex is the component of the respiratory chain that catalyzes the reduction of oxygen to water. Acts as an assembly factor that specifically drives the homodimerization of CIV complexes, mediating the formation of mitochondrial respiratory supercomplexes (respirasomes) containing two CIV: supercomplxes with two molecules of CIV show improved activity. Despite being highly expressed in brown adipose tissue, not required for thermogenesis. The chain is Cytochrome c oxidase subunit 7A1, mitochondrial (COX7A1) from Homo sapiens (Human).